A 121-amino-acid chain; its full sequence is NAD(P)H-quinone oxidoreductase subunit 3, chloroplastic (121 aa).

The next 3 helical transmembrane spans lie at 10 to 30, 65 to 85, and 90 to 110; these read FFIFLLLASVIPILAFSISKF, MFALVFVIFDVETVFLYPWAM, and LGLSAFIEALVFVFILIIGLV.

It belongs to the complex I subunit 3 family. As to quaternary structure, NDH is composed of at least 16 different subunits, 5 of which are encoded in the nucleus.

It localises to the plastid. Its subcellular location is the chloroplast thylakoid membrane. It catalyses the reaction a plastoquinone + NADH + (n+1) H(+)(in) = a plastoquinol + NAD(+) + n H(+)(out). The enzyme catalyses a plastoquinone + NADPH + (n+1) H(+)(in) = a plastoquinol + NADP(+) + n H(+)(out). NDH shuttles electrons from NAD(P)H:plastoquinone, via FMN and iron-sulfur (Fe-S) centers, to quinones in the photosynthetic chain and possibly in a chloroplast respiratory chain. The immediate electron acceptor for the enzyme in this species is believed to be plastoquinone. Couples the redox reaction to proton translocation, and thus conserves the redox energy in a proton gradient. The polypeptide is NAD(P)H-quinone oxidoreductase subunit 3, chloroplastic (Physcomitrium patens (Spreading-leaved earth moss)).